The primary structure comprises 105 residues: MNLGVSMLRILFLLDVGGAQVLATGKTPGAEIDFKYALIGTAVGVAISAGFLALKICMIRRHLFDDDSSDLKSTPGGLSDTIPLKKRAPRRNHNFSKRDAQVIEL.

The N-terminal stretch at 1–19 is a signal peptide; sequence MNLGVSMLRILFLLDVGGA. Over 20-38 the chain is Extracellular; it reads QVLATGKTPGAEIDFKYAL. A helical transmembrane segment spans residues 39 to 59; it reads IGTAVGVAISAGFLALKICMI. Residues 60-105 lie on the Cytoplasmic side of the membrane; sequence RRHLFDDDSSDLKSTPGGLSDTIPLKKRAPRRNHNFSKRDAQVIEL.

The protein localises to the membrane. The chain is Transmembrane protein 273 from Homo sapiens (Human).